Consider the following 355-residue polypeptide: 3-dehydroquinate synthase (355 aa).

Residues 71–76 (EGEERK), 105–109 (GVVGD), 129–130 (TS), lysine 142, and lysine 151 contribute to the NAD(+) site. Zn(2+) contacts are provided by glutamate 184, histidine 246, and histidine 263.

The protein belongs to the sugar phosphate cyclases superfamily. Dehydroquinate synthase family. Co(2+) is required as a cofactor. The cofactor is Zn(2+). It depends on NAD(+) as a cofactor.

It localises to the cytoplasm. It catalyses the reaction 7-phospho-2-dehydro-3-deoxy-D-arabino-heptonate = 3-dehydroquinate + phosphate. It functions in the pathway metabolic intermediate biosynthesis; chorismate biosynthesis; chorismate from D-erythrose 4-phosphate and phosphoenolpyruvate: step 2/7. Its function is as follows. Catalyzes the conversion of 3-deoxy-D-arabino-heptulosonate 7-phosphate (DAHP) to dehydroquinate (DHQ). This is 3-dehydroquinate synthase from Streptococcus pneumoniae (strain Hungary19A-6).